The chain runs to 222 residues: Eukaryotic translation initiation factor 3 subunit K (222 aa).

The PCI domain maps to 46 to 208 (YDLEANLAVL…KIKTKNITEK (163 aa)).

Belongs to the eIF-3 subunit K family. In terms of assembly, component of the eukaryotic translation initiation factor 3 (eIF-3) complex. The eIF-3 complex interacts with pix.

Its subcellular location is the cytoplasm. Functionally, component of the eukaryotic translation initiation factor 3 (eIF-3) complex, which is involved in protein synthesis of a specialized repertoire of mRNAs and, together with other initiation factors, stimulates binding of mRNA and methionyl-tRNAi to the 40S ribosome. The eIF-3 complex specifically targets and initiates translation of a subset of mRNAs involved in cell proliferation. The polypeptide is Eukaryotic translation initiation factor 3 subunit K (Drosophila ananassae (Fruit fly)).